Consider the following 270-residue polypeptide: Cystinosin homolog (270 aa).

The PQ-loop 1 domain occupies 9–75 (LEISYEIVGW…LYFSPVIQKQ (67 aa)). The helical transmembrane segment at 14 to 34 (EIVGWIAFASWSISFYPQLIL) threads the bilayer. N52 carries an N-linked (GlcNAc...) asparagine glycan. 3 helical membrane passes run 93 to 113 (VAFS…IFIY), 123 to 143 (LAIG…FIAL), and 148 to 168 (WLWL…VKYI). The 63-residue stretch at 151-213 (LISIFNSIQV…IQSIDQNSWK (63 aa)) folds into the PQ-loop 2 domain. N174 is a glycosylation site (N-linked (GlcNAc...) asparagine). Helical transmembrane passes span 180 to 200 (TVGW…ANYL) and 223 to 243 (LLSL…YVLY). Residues 250-270 (KSPETGEESNEPLIDSSHEHV) are disordered.

Belongs to the cystinosin (TC 2.A.43.1) family.

It is found in the lysosome membrane. Its function is as follows. Thought to transport cystine out of lysosomes. The protein is Cystinosin homolog of Arabidopsis thaliana (Mouse-ear cress).